Consider the following 430-residue polypeptide: Mitochondrial distribution and morphology protein 12 (430 aa).

The 430-residue stretch at 1-430 folds into the SMP-LTD domain; it reads MSIDIDWERA…VYPSFWTFLI (430 aa). 3 disordered regions span residues 61–117, 177–276, and 352–377; these read DLSD…YESN, TPLG…RMRE, and MGPE…KPSS. Over residues 69-82 the composition is skewed to acidic residues; that stretch reads FYEDDDENFSDSSE. The segment covering 85 to 96 has biased composition (basic and acidic residues); the sequence is SPTREPVDRYGN. Polar residues-rich tracts occupy residues 211 to 233 and 241 to 251; these read SAQS…SMSI and ASQGMPNNQGQ. Basic and acidic residues predominate over residues 265–276; it reads PLDDTPPRRMRE.

The protein belongs to the MDM12 family. As to quaternary structure, component of the ER-mitochondria encounter structure (ERMES) or MDM complex, composed of MMM1, MDM10, MDM12 and MDM34. An MMM1 homodimer associates with one molecule of MDM12 on each side in a pairwise head-to-tail manner, and the SMP-LTD domains of MMM1 and MDM12 generate a continuous hydrophobic tunnel for phospholipid trafficking.

Its subcellular location is the mitochondrion outer membrane. The protein resides in the endoplasmic reticulum membrane. Its function is as follows. Component of the ERMES/MDM complex, which serves as a molecular tether to connect the endoplasmic reticulum (ER) and mitochondria. Components of this complex are involved in the control of mitochondrial shape and protein biogenesis, and function in nonvesicular lipid trafficking between the ER and mitochondria. MDM12 is required for the interaction of the ER-resident membrane protein MMM1 and the outer mitochondrial membrane-resident beta-barrel protein MDM10. The MDM12-MMM1 subcomplex functions in the major beta-barrel assembly pathway that is responsible for biogenesis of all mitochondrial outer membrane beta-barrel proteins, and acts in a late step after the SAM complex. The MDM10-MDM12-MMM1 subcomplex further acts in the TOM40-specific pathway after the action of the MDM12-MMM1 complex. Essential for establishing and maintaining the structure of mitochondria and maintenance of mtDNA nucleoids. The sequence is that of Mitochondrial distribution and morphology protein 12 from Ajellomyces capsulatus (strain G186AR / H82 / ATCC MYA-2454 / RMSCC 2432) (Darling's disease fungus).